Consider the following 379-residue polypeptide: UDP-4-amino-4-deoxy-L-arabinose--oxoglutarate aminotransferase (379 aa).

Lys-182 is subject to N6-(pyridoxal phosphate)lysine.

It belongs to the DegT/DnrJ/EryC1 family. ArnB subfamily. In terms of assembly, homodimer. Pyridoxal 5'-phosphate serves as cofactor.

The catalysed reaction is UDP-4-amino-4-deoxy-beta-L-arabinose + 2-oxoglutarate = UDP-beta-L-threo-pentopyranos-4-ulose + L-glutamate. The protein operates within nucleotide-sugar biosynthesis; UDP-4-deoxy-4-formamido-beta-L-arabinose biosynthesis; UDP-4-deoxy-4-formamido-beta-L-arabinose from UDP-alpha-D-glucuronate: step 2/3. Its pathway is bacterial outer membrane biogenesis; lipopolysaccharide biosynthesis. Its function is as follows. Catalyzes the conversion of UDP-4-keto-arabinose (UDP-Ara4O) to UDP-4-amino-4-deoxy-L-arabinose (UDP-L-Ara4N). The modified arabinose is attached to lipid A and is required for resistance to polymyxin and cationic antimicrobial peptides. The sequence is that of UDP-4-amino-4-deoxy-L-arabinose--oxoglutarate aminotransferase from Escherichia fergusonii (strain ATCC 35469 / DSM 13698 / CCUG 18766 / IAM 14443 / JCM 21226 / LMG 7866 / NBRC 102419 / NCTC 12128 / CDC 0568-73).